The primary structure comprises 65 residues: MPKIKTLQAASKRFKITALGKYKYKHANMRHILTKKSTKHKRHLRQKSILPKIYLTTIMKYLPYI.

It belongs to the bacterial ribosomal protein bL35 family.

This Blochmanniella pennsylvanica (strain BPEN) protein is Large ribosomal subunit protein bL35.